The primary structure comprises 234 residues: Carboxy-S-adenosyl-L-methionine synthase (234 aa).

Residues Tyr35, 60 to 62 (GSS), 83 to 84 (DN), Asn124, and Arg191 contribute to the S-adenosyl-L-methionine site.

The protein belongs to the class I-like SAM-binding methyltransferase superfamily. Cx-SAM synthase family. Homodimer.

The enzyme catalyses prephenate + S-adenosyl-L-methionine = carboxy-S-adenosyl-L-methionine + 3-phenylpyruvate + H2O. Its function is as follows. Catalyzes the conversion of S-adenosyl-L-methionine (SAM) to carboxy-S-adenosyl-L-methionine (Cx-SAM). The sequence is that of Carboxy-S-adenosyl-L-methionine synthase from Nautilia profundicola (strain ATCC BAA-1463 / DSM 18972 / AmH).